Reading from the N-terminus, the 261-residue chain is Ribosomal RNA small subunit methyltransferase A (261 aa).

Positions 15, 17, 42, 64, 90, and 109 each coordinate S-adenosyl-L-methionine.

It belongs to the class I-like SAM-binding methyltransferase superfamily. rRNA adenine N(6)-methyltransferase family. RsmA subfamily.

The protein resides in the cytoplasm. It carries out the reaction adenosine(1518)/adenosine(1519) in 16S rRNA + 4 S-adenosyl-L-methionine = N(6)-dimethyladenosine(1518)/N(6)-dimethyladenosine(1519) in 16S rRNA + 4 S-adenosyl-L-homocysteine + 4 H(+). Functionally, specifically dimethylates two adjacent adenosines (A1518 and A1519) in the loop of a conserved hairpin near the 3'-end of 16S rRNA in the 30S particle. May play a critical role in biogenesis of 30S subunits. The sequence is that of Ribosomal RNA small subunit methyltransferase A from Wolbachia sp. subsp. Brugia malayi (strain TRS).